A 716-amino-acid polypeptide reads, in one-letter code: Splicing factor Cactin (716 aa).

Positions 1-104 are disordered; sequence MGSHGKGKRD…SKKAQKKALR (104 aa). Over residues 10–22 the composition is skewed to basic and acidic residues; it reads DRSGRQKKRRDES. The segment covering 25 to 45 has biased composition (low complexity); that stretch reads GSESESYTSDSDGSDDLSPPR. The segment covering 46 to 61 has biased composition (basic residues); sequence SSRRKKGSSSRRTRRR. A compositionally biased stretch (basic and acidic residues) spans 81–95; the sequence is SSKDYSEEKVTEYMS. Residues 153–201 are a coiled coil; the sequence is SVKAEKRRHRERMTEVEKVKKRREERAVEKARHEEEMALLARERARAEF. At serine 450 the chain carries Phosphoserine. The tract at residues 466–525 is disordered; sequence VEENEEEINDTNLSDAEEAFSPEPVAEEEEADEAAEAAGSFSPELMHGDDREEAIDPEED. Over residues 468–500 the composition is skewed to acidic residues; it reads ENEEEINDTNLSDAEEAFSPEPVAEEEEADEAA.

Belongs to the CACTIN family. In terms of assembly, interacts with At5g63440.

The protein resides in the nucleus speckle. Its function is as follows. Plays a role in pre-mRNA splicing by facilitating excision of a subset of introns. Required for embryogenesis. The sequence is that of Splicing factor Cactin (CTN) from Arabidopsis thaliana (Mouse-ear cress).